The sequence spans 184 residues: MVVIAISGQPGSGKTTVAREVARVLNLPLVSSGSLFRELAAKMGIDFIEFHKYAEKNPDIDKVVDSMAIERAKAGNVVLEGHLAAWIVRPYADICIYLKASSEIRARRISIRDKKSFEDALREVREREELNRRRYLSLYNIDINDLSVFDLVLDTSYLSINDAIRISLDYICTVLGFKYSRKFC.

8–16 is an ATP binding site; it reads GQPGSGKTT.

This sequence belongs to the cytidylate kinase family. Type 2 subfamily.

The protein resides in the cytoplasm. The enzyme catalyses CMP + ATP = CDP + ADP. It catalyses the reaction dCMP + ATP = dCDP + ADP. The chain is Cytidylate kinase from Pyrobaculum islandicum (strain DSM 4184 / JCM 9189 / GEO3).